A 109-amino-acid polypeptide reads, in one-letter code: MQDNFTASSPSSSSSASGVAEDNLAARRRRLKFRANHRGTFETDILIGGFVEANADTMTAEELTDMENILEMPDPELTDWLFGRLPLPEEKATPMLRRMVEDSRIRRGG.

Residues methionine 1–aspartate 22 form a disordered region. Residues alanine 7 to serine 17 are compositionally biased toward low complexity.

It belongs to the SdhE FAD assembly factor family.

It is found in the cytoplasm. In terms of biological role, an FAD assembly protein, which accelerates covalent attachment of the cofactor into other proteins. Plays an essential role in the assembly of succinate dehydrogenase (SDH, respiratory complex II), an enzyme complex that is a component of both the tricarboxylic acid cycle and the electron transport chain, and which couples the oxidation of succinate to fumarate with the reduction of ubiquinone (coenzyme Q) to ubiquinol. Required for flavinylation of SdhA, when the SDH operon and this gene are overexpressed in G.oxydans. Flavinylation of SdhA is detected only in the presence of sdhE. This chain is FAD assembly factor SdhE, found in Acetobacter pasteurianus (strain NBRC 105184 / IFO 3283-01).